The primary structure comprises 194 residues: Peptidyl-tRNA hydrolase (194 aa).

Tyr-17 contributes to the tRNA binding site. Catalysis depends on His-22, which acts as the Proton acceptor. TRNA is bound by residues Phe-68, Asn-70, and Asn-116.

It belongs to the PTH family. In terms of assembly, monomer.

The protein localises to the cytoplasm. It carries out the reaction an N-acyl-L-alpha-aminoacyl-tRNA + H2O = an N-acyl-L-amino acid + a tRNA + H(+). Functionally, hydrolyzes ribosome-free peptidyl-tRNAs (with 1 or more amino acids incorporated), which drop off the ribosome during protein synthesis, or as a result of ribosome stalling. Its function is as follows. Catalyzes the release of premature peptidyl moieties from peptidyl-tRNA molecules trapped in stalled 50S ribosomal subunits, and thus maintains levels of free tRNAs and 50S ribosomes. In Pasteurella multocida (strain Pm70), this protein is Peptidyl-tRNA hydrolase.